Here is a 38-residue protein sequence, read N- to C-terminus: ATP synthase subunit O, mitochondrial (38 aa).

The protein belongs to the ATPase delta chain family. F-type ATPases have 2 components, CF(1) - the catalytic core - and CF(0) - the membrane proton channel. CF(1) has five subunits: alpha(3), beta(3), gamma(1), delta(1), epsilon(1). CF(0) has three main subunits: a, b and c.

The protein localises to the mitochondrion. It is found in the mitochondrion inner membrane. Functionally, mitochondrial membrane ATP synthase (F(1)F(0) ATP synthase or Complex V) produces ATP from ADP in the presence of a proton gradient across the membrane which is generated by electron transport complexes of the respiratory chain. F-type ATPases consist of two structural domains, F(1) - containing the extramembraneous catalytic core and F(0) - containing the membrane proton channel, linked together by a central stalk and a peripheral stalk. During catalysis, ATP synthesis in the catalytic domain of F(1) is coupled via a rotary mechanism of the central stalk subunits to proton translocation. Part of the complex F(0) domain and the peripheric stalk, which acts as a stator to hold the catalytic alpha(3)beta(3) subcomplex and subunit a/ATP6 static relative to the rotary elements. This chain is ATP synthase subunit O, mitochondrial, found in Pisum sativum (Garden pea).